The following is a 344-amino-acid chain: N-acetyl-gamma-glutamyl-phosphate reductase (344 aa).

The active site involves C150.

Belongs to the NAGSA dehydrogenase family. Type 1 subfamily.

It localises to the cytoplasm. The catalysed reaction is N-acetyl-L-glutamate 5-semialdehyde + phosphate + NADP(+) = N-acetyl-L-glutamyl 5-phosphate + NADPH + H(+). The protein operates within amino-acid biosynthesis; L-arginine biosynthesis; N(2)-acetyl-L-ornithine from L-glutamate: step 3/4. In terms of biological role, catalyzes the NADPH-dependent reduction of N-acetyl-5-glutamyl phosphate to yield N-acetyl-L-glutamate 5-semialdehyde. This is N-acetyl-gamma-glutamyl-phosphate reductase from Pseudomonas fluorescens (strain SBW25).